Consider the following 109-residue polypeptide: Nucleoid-associated protein Psyc_0793 (109 aa).

The protein belongs to the YbaB/EbfC family. Homodimer.

It localises to the cytoplasm. Its subcellular location is the nucleoid. Its function is as follows. Binds to DNA and alters its conformation. May be involved in regulation of gene expression, nucleoid organization and DNA protection. The polypeptide is Nucleoid-associated protein Psyc_0793 (Psychrobacter arcticus (strain DSM 17307 / VKM B-2377 / 273-4)).